A 449-amino-acid chain; its full sequence is Phosphoglucosamine mutase (449 aa).

S101 serves as the catalytic Phosphoserine intermediate. Mg(2+)-binding residues include S101, D242, D244, and D246. Residue S101 is modified to Phosphoserine.

It belongs to the phosphohexose mutase family. Requires Mg(2+) as cofactor. In terms of processing, activated by phosphorylation.

The enzyme catalyses alpha-D-glucosamine 1-phosphate = D-glucosamine 6-phosphate. Catalyzes the conversion of glucosamine-6-phosphate to glucosamine-1-phosphate. The chain is Phosphoglucosamine mutase from Hyphomonas neptunium (strain ATCC 15444).